We begin with the raw amino-acid sequence, 146 residues long: Large ribosomal subunit protein uL15 (146 aa).

Residues 1-51 form a disordered region; that stretch reads MKLHELQPAPGSRKERNRVGRGIGSGNGKTSGKGHKGQNARSGGGVRIGFE. Composition is skewed to gly residues over residues 21–31 and 42–51; these read RGIGSGNGKTS and SGGGVRIGFE.

The protein belongs to the universal ribosomal protein uL15 family. As to quaternary structure, part of the 50S ribosomal subunit.

In terms of biological role, binds to the 23S rRNA. The polypeptide is Large ribosomal subunit protein uL15 (Anoxybacillus flavithermus (strain DSM 21510 / WK1)).